The primary structure comprises 456 residues: Probable glycine dehydrogenase (decarboxylating) subunit 1 (456 aa).

Belongs to the GcvP family. N-terminal subunit subfamily. In terms of assembly, the glycine cleavage system is composed of four proteins: P, T, L and H. In this organism, the P 'protein' is a heterodimer of two subunits.

The enzyme catalyses N(6)-[(R)-lipoyl]-L-lysyl-[glycine-cleavage complex H protein] + glycine + H(+) = N(6)-[(R)-S(8)-aminomethyldihydrolipoyl]-L-lysyl-[glycine-cleavage complex H protein] + CO2. The glycine cleavage system catalyzes the degradation of glycine. The P protein binds the alpha-amino group of glycine through its pyridoxal phosphate cofactor; CO(2) is released and the remaining methylamine moiety is then transferred to the lipoamide cofactor of the H protein. This chain is Probable glycine dehydrogenase (decarboxylating) subunit 1, found in Legionella pneumophila (strain Lens).